The following is a 547-amino-acid chain: Isoflavonoid 7-O-beta-apiosyl-glucoside beta-glycosidase (547 aa).

The first 31 residues, 1 to 31 (MHAMTFKAILLLGLLALVSTSASIAFAKEVR), serve as a signal peptide directing secretion. Residue Gln-59 coordinates a beta-D-glucoside. 2 N-linked (GlcNAc...) asparagine glycosylation sites follow: Asn-72 and Asn-132. A beta-D-glucoside is bound at residue His-159. The N-linked (GlcNAc...) asparagine glycan is linked to Asn-175. 204–205 (NE) is a binding site for a beta-D-glucoside. Catalysis depends on Glu-205, which acts as the Proton donor. A disulfide bridge connects residues Cys-224 and Cys-232. Asn-285 is a glycosylation site (N-linked (GlcNAc...) asparagine). A beta-D-glucoside-binding positions include Tyr-348, Glu-419, Trp-468, 475-476 (EW), and Phe-484. Residue Glu-419 is the Nucleophile of the active site. An N-linked (GlcNAc...) asparagine glycan is attached at Asn-490.

This sequence belongs to the glycosyl hydrolase 1 family. In terms of assembly, homotetramer.

The enzyme catalyses 7-[beta-D-apiofuranosyl-(1-&gt;6)-beta-D-glucopyranosyloxy]isoflavonoid + H2O = a 7-hydroxyisoflavonoid + beta-D-apiofuranosyl-(1-&gt;6)-D-glucose.. Not inhibited by iron, calcium, mercury, manganese, zinc or EDTA. Functionally, hydrolyzes dalpatein 7-O-beta-D-apiofuranosyl-(1-&gt;6)-beta-D-glucopyranoside and dalnigrein 7-O-beta-D-apiofuranosyl-(1-&gt;6)-beta-D-glucopyranoside. Also has activity towards pNP-beta-D-fucoside and pNP-beta-D-glucoside, but not pNP-beta-cellobioside. This chain is Isoflavonoid 7-O-beta-apiosyl-glucoside beta-glycosidase, found in Dalbergia nigrescens (Thai blackwood).